Here is a 513-residue protein sequence, read N- to C-terminus: Bifunctional purine biosynthesis protein PurH (513 aa).

Residues 1 to 144 (MKRALVSVSD…KNYRDVTIVV (144 aa)) enclose the MGS-like domain.

Belongs to the PurH family.

The enzyme catalyses (6R)-10-formyltetrahydrofolate + 5-amino-1-(5-phospho-beta-D-ribosyl)imidazole-4-carboxamide = 5-formamido-1-(5-phospho-D-ribosyl)imidazole-4-carboxamide + (6S)-5,6,7,8-tetrahydrofolate. It carries out the reaction IMP + H2O = 5-formamido-1-(5-phospho-D-ribosyl)imidazole-4-carboxamide. The protein operates within purine metabolism; IMP biosynthesis via de novo pathway; 5-formamido-1-(5-phospho-D-ribosyl)imidazole-4-carboxamide from 5-amino-1-(5-phospho-D-ribosyl)imidazole-4-carboxamide (10-formyl THF route): step 1/1. It participates in purine metabolism; IMP biosynthesis via de novo pathway; IMP from 5-formamido-1-(5-phospho-D-ribosyl)imidazole-4-carboxamide: step 1/1. The sequence is that of Bifunctional purine biosynthesis protein PurH from Lactobacillus delbrueckii subsp. bulgaricus (strain ATCC BAA-365 / Lb-18).